The primary structure comprises 459 residues: GTPase Der (459 aa).

EngA-type G domains lie at 3-167 and 188-363; these read FTLA…PEPV and IRVA…AVWN. GTP contacts are provided by residues 9-16, 56-60, 119-122, 194-201, 241-245, and 306-309; these read GRPNVGKS, DTAGL, NKSE, GRPNAGKS, and NKWD. The 85-residue stretch at 364-448 folds into the KH-like domain; sequence RRVPTAALNR…PVRITLREKA (85 aa).

This sequence belongs to the TRAFAC class TrmE-Era-EngA-EngB-Septin-like GTPase superfamily. EngA (Der) GTPase family. In terms of assembly, associates with the 50S ribosomal subunit.

Functionally, GTPase that plays an essential role in the late steps of ribosome biogenesis. This is GTPase Der from Rhodopseudomonas palustris (strain TIE-1).